Reading from the N-terminus, the 357-residue chain is Chorismate synthase (357 aa).

An NADP(+)-binding site is contributed by R46. FMN is bound by residues 123 to 125, 235 to 236, G275, 290 to 294, and R316; these read RSS, NA, and KPTPS.

This sequence belongs to the chorismate synthase family. In terms of assembly, homotetramer. FMNH2 is required as a cofactor.

It carries out the reaction 5-O-(1-carboxyvinyl)-3-phosphoshikimate = chorismate + phosphate. It participates in metabolic intermediate biosynthesis; chorismate biosynthesis; chorismate from D-erythrose 4-phosphate and phosphoenolpyruvate: step 7/7. Its function is as follows. Catalyzes the anti-1,4-elimination of the C-3 phosphate and the C-6 proR hydrogen from 5-enolpyruvylshikimate-3-phosphate (EPSP) to yield chorismate, which is the branch point compound that serves as the starting substrate for the three terminal pathways of aromatic amino acid biosynthesis. This reaction introduces a second double bond into the aromatic ring system. This Sulfurovum sp. (strain NBC37-1) protein is Chorismate synthase.